Reading from the N-terminus, the 642-residue chain is Forkhead box protein K2 (642 aa).

Residues 30-91 (VTIGRNSSQG…NGVFVDGVFQ (62 aa)) form the FHA domain. The interval 201–221 (QSENDKDASGGDSPKDDSKPP) is disordered. Residues 203–219 (ENDKDASGGDSPKDDSK) show a composition bias toward basic and acidic residues. The segment at residues 219–314 (KPPYSYAQLI…EQAFRKRRPR (96 aa)) is a DNA-binding region (fork-head). The interval 261–279 (KGWQNSIRHNLSLNRYFIK) is DNA-binding; major groove. Residues Leu271, Ser272, Asn274, and Phe277 each coordinate Mg(2+). DNA-binding; minor groove stretches follow at residues 289-293 (KGSFW) and 309-314 (RKRRPR). Disordered regions lie at residues 323–359 (LGPL…REGS) and 589–615 (ASAS…KTDE). Polar residues-rich tracts occupy residues 327 to 353 (SSRS…TPES) and 589 to 605 (ASAS…QSEQ). The segment covering 606 to 615 (PDIKRGKTDE) has biased composition (basic and acidic residues).

As to expression, in neurula embryos, expressed strongly in the future floor plate and weakly in the neural crest progenitor cells. As development progresses, expression becomes stronger in neural crest cells. At stage 24, expressed in the eye, brain, branchial arches and in the presomitic mesoderm in the posterior embryo. At stage 29, additionally expressed in the pronephric tubules. At stage 35, expressed in the migrating lateral muscle precursors of the abdomen. Additionally, the developing proctodeum and head structures including the branchial arches, eyes and otic vesicles continue to show expression. Expression also persists in the nephros.

It is found in the nucleus. It localises to the cytoplasm. In terms of biological role, transcriptional regulator involved in different processes such as glucose metabolism, aerobic glycolysis and autophagy. Recognizes and binds the forkhead DNA sequence motif (5'-GTAAACA-3') and can both act as a transcription activator or repressor, depending on the context. Acts as a key regulator of metabolic reprogramming towards aerobic glycolysis, a process in which glucose is converted to lactate in the presence of oxygen. Acts as a negative regulator of autophagy in skeletal muscle: in response to starvation, enters the nucleus, binds the promoters of autophagy genes and represses their expression, preventing proteolysis of skeletal muscle proteins. This is Forkhead box protein K2 from Xenopus laevis (African clawed frog).